Reading from the N-terminus, the 152-residue chain is Ribonuclease H (152 aa).

The RNase H type-1 domain occupies 1–142; the sequence is MGSKVVIYTD…ADKLAVQGRE (142 aa). Mg(2+) contacts are provided by aspartate 10, glutamate 48, aspartate 70, and aspartate 134.

The protein belongs to the RNase H family. As to quaternary structure, monomer. Mg(2+) serves as cofactor.

The protein localises to the cytoplasm. It catalyses the reaction Endonucleolytic cleavage to 5'-phosphomonoester.. Functionally, endonuclease that specifically degrades the RNA of RNA-DNA hybrids. The chain is Ribonuclease H from Rickettsia massiliae (strain Mtu5).